A 354-amino-acid chain; its full sequence is Uroporphyrinogen decarboxylase (354 aa).

Residues Arg27–Arg31, Phe46, Asp77, Tyr153, Thr208, and His326 contribute to the substrate site.

It belongs to the uroporphyrinogen decarboxylase family. In terms of assembly, homodimer.

It localises to the cytoplasm. The catalysed reaction is uroporphyrinogen III + 4 H(+) = coproporphyrinogen III + 4 CO2. Its pathway is porphyrin-containing compound metabolism; protoporphyrin-IX biosynthesis; coproporphyrinogen-III from 5-aminolevulinate: step 4/4. Its function is as follows. Catalyzes the decarboxylation of four acetate groups of uroporphyrinogen-III to yield coproporphyrinogen-III. The polypeptide is Uroporphyrinogen decarboxylase (Neisseria meningitidis serogroup B (strain ATCC BAA-335 / MC58)).